The following is a 330-amino-acid chain: CRISPR-associated endonuclease Cas1 2 (330 aa).

3 residues coordinate Mn(2+): Glu156, His222, and Glu237.

Belongs to the CRISPR-associated endonuclease Cas1 family. As to quaternary structure, homodimer, forms a heterotetramer with a Cas2 homodimer. The cofactor is Mg(2+). Mn(2+) serves as cofactor.

CRISPR (clustered regularly interspaced short palindromic repeat), is an adaptive immune system that provides protection against mobile genetic elements (viruses, transposable elements and conjugative plasmids). CRISPR clusters contain spacers, sequences complementary to antecedent mobile elements, and target invading nucleic acids. CRISPR clusters are transcribed and processed into CRISPR RNA (crRNA). Acts as a dsDNA endonuclease. Involved in the integration of spacer DNA into the CRISPR cassette. This chain is CRISPR-associated endonuclease Cas1 2, found in Thermodesulfovibrio yellowstonii (strain ATCC 51303 / DSM 11347 / YP87).